Consider the following 489-residue polypeptide: N-succinylglutamate 5-semialdehyde dehydrogenase (489 aa).

NAD(+) is bound at residue 221–226 (GSSGTG). Catalysis depends on residues Glu-244 and Cys-278.

Belongs to the aldehyde dehydrogenase family. AstD subfamily.

It catalyses the reaction N-succinyl-L-glutamate 5-semialdehyde + NAD(+) + H2O = N-succinyl-L-glutamate + NADH + 2 H(+). The protein operates within amino-acid degradation; L-arginine degradation via AST pathway; L-glutamate and succinate from L-arginine: step 4/5. In terms of biological role, catalyzes the NAD-dependent reduction of succinylglutamate semialdehyde into succinylglutamate. In Sorangium cellulosum (strain So ce56) (Polyangium cellulosum (strain So ce56)), this protein is N-succinylglutamate 5-semialdehyde dehydrogenase.